We begin with the raw amino-acid sequence, 398 residues long: 1-aminocyclopropane-1-carboxylate oxidase homolog 5 (398 aa).

Residues 247–347 (KSHIMFGQYY…RISMPCFVST (101 aa)) form the Fe2OG dioxygenase domain. Fe cation is bound by residues His-271, Asp-273, and His-327. Arg-338 is a 2-oxoglutarate binding site.

This sequence belongs to the iron/ascorbate-dependent oxidoreductase family. Fe(2+) serves as cofactor. In terms of tissue distribution, expressed in etiolated seedlings, leaves, stems and flowers.

This Arabidopsis thaliana (Mouse-ear cress) protein is 1-aminocyclopropane-1-carboxylate oxidase homolog 5 (2A6).